Here is a 357-residue protein sequence, read N- to C-terminus: Dynein axonemal assembly factor 10 (357 aa).

WD repeat units follow at residues 63–105 (EKAK…MPVY), 115–154 (NAID…DPVA), 162–205 (ENKR…LRWE), 207–249 (NIKN…PTKG), 257–297 (AHKS…QRSK), and 319–357 (LSTQ…LNKI).

As to quaternary structure, component of the PAQosome complex which is responsible for the biogenesis of several protein complexes and which consists of R2TP complex members RUVBL1, RUVBL2, RPAP3 and PIH1D1, URI complex members PFDN2, PFDN6, PDRG1, UXT and URI1 as well as ASDURF, POLR2E and DNAAF10/WDR92. Interacts with PIH1D1; the interaction associates DNAAF10 with the R2TP complex. Interacts with several dynein axonemal assembly factors. As to expression, widely expressed with the highest expression in testis.

The protein localises to the dynein axonemal particle. Key assembly factor specifically required for the stability of axonemal dynein heavy chains in cytoplasm. The polypeptide is Dynein axonemal assembly factor 10 (Homo sapiens (Human)).